Consider the following 130-residue polypeptide: S-protein homolog 30 (130 aa).

2 N-linked (GlcNAc...) asparagine glycosylation sites follow: N64 and N77.

The protein belongs to the plant self-incompatibility (S1) protein family.

It localises to the secreted. The protein is S-protein homolog 30 of Arabidopsis thaliana (Mouse-ear cress).